The following is a 691-amino-acid chain: DNA ligase (691 aa).

Residues 36–40, 85–86, and Glu118 contribute to the NAD(+) site; these read DAEYD and SL. Lys120 serves as the catalytic N6-AMP-lysine intermediate. Positions 141, 178, 295, and 319 each coordinate NAD(+). Zn(2+) is bound by residues Cys413, Cys416, Cys431, and Cys437. One can recognise a BRCT domain in the interval 595–684; it reads GRPQPLAGQT…ESASSEDAQP (90 aa).

This sequence belongs to the NAD-dependent DNA ligase family. LigA subfamily. It depends on Mg(2+) as a cofactor. Mn(2+) serves as cofactor.

It carries out the reaction NAD(+) + (deoxyribonucleotide)n-3'-hydroxyl + 5'-phospho-(deoxyribonucleotide)m = (deoxyribonucleotide)n+m + AMP + beta-nicotinamide D-nucleotide.. In terms of biological role, DNA ligase that catalyzes the formation of phosphodiester linkages between 5'-phosphoryl and 3'-hydroxyl groups in double-stranded DNA using NAD as a coenzyme and as the energy source for the reaction. It is essential for DNA replication and repair of damaged DNA. The protein is DNA ligase of Chromohalobacter salexigens (strain ATCC BAA-138 / DSM 3043 / CIP 106854 / NCIMB 13768 / 1H11).